Here is a 587-residue protein sequence, read N- to C-terminus: Bifunctional lycopene cyclase/phytoene synthase (587 aa).

The lycopene beta-cyclase stretch occupies residues 1-236 (MGLDYILVHV…IVFGLVCIDY (236 aa)). The next 7 helical transmembrane spans lie at 5 to 25 (YILV…LVYW), 35 to 55 (KIST…SYLV), 65 to 85 (NGVI…FFII), 91 to 111 (SLVY…GTVA), 116 to 136 (LIGA…LCFG), 145 to 165 (IITW…GFII), and 218 to 238 (LFFL…DYAI). Residues 243–587 (CELVQSPQAV…VAYRAMAWRK (345 aa)) form a phytoene synthase region.

In the N-terminal section; belongs to the lycopene beta-cyclase family. It in the C-terminal section; belongs to the phytoene/squalene synthase family.

It localises to the membrane. The enzyme catalyses all-trans-lycopene = gamma-carotene. The catalysed reaction is gamma-carotene = all-trans-beta-carotene. It catalyses the reaction 2 (2E,6E,10E)-geranylgeranyl diphosphate = 15-cis-phytoene + 2 diphosphate. It functions in the pathway carotenoid biosynthesis; beta-carotene biosynthesis. The protein operates within carotenoid biosynthesis; phytoene biosynthesis; all-trans-phytoene from geranylgeranyl diphosphate: step 1/1. In terms of biological role, bifunctional enzyme that catalyzes the reactions from geranylgeranyl diphosphate to phytoene (phytoene synthase) and lycopene to beta-carotene via the intermediate gamma-carotene (lycopene cyclase). The chain is Bifunctional lycopene cyclase/phytoene synthase from Aspergillus oryzae (strain ATCC 42149 / RIB 40) (Yellow koji mold).